Reading from the N-terminus, the 383-residue chain is Succinyl-diaminopimelate desuccinylase (383 aa).

A Zn(2+)-binding site is contributed by His-74. The active site involves Asp-76. Asp-107 provides a ligand contact to Zn(2+). The Proton acceptor role is filled by Glu-141. The Zn(2+) site is built by Glu-142, Glu-170, and His-356.

The protein belongs to the peptidase M20A family. DapE subfamily. As to quaternary structure, homodimer. The cofactor is Zn(2+). Requires Co(2+) as cofactor.

The catalysed reaction is N-succinyl-(2S,6S)-2,6-diaminopimelate + H2O = (2S,6S)-2,6-diaminopimelate + succinate. It functions in the pathway amino-acid biosynthesis; L-lysine biosynthesis via DAP pathway; LL-2,6-diaminopimelate from (S)-tetrahydrodipicolinate (succinylase route): step 3/3. Functionally, catalyzes the hydrolysis of N-succinyl-L,L-diaminopimelic acid (SDAP), forming succinate and LL-2,6-diaminopimelate (DAP), an intermediate involved in the bacterial biosynthesis of lysine and meso-diaminopimelic acid, an essential component of bacterial cell walls. This is Succinyl-diaminopimelate desuccinylase from Ralstonia nicotianae (strain ATCC BAA-1114 / GMI1000) (Ralstonia solanacearum).